The following is a 108-amino-acid chain: Class I hydrophobin 3 (108 aa).

The first 17 residues, 1 to 17 (MFFQTTIVAALASLAVA), serve as a signal peptide directing secretion. Cystine bridges form between C28-C87, C35-C81, C36-C69, and C88-C101. N37 is a glycosylation site (N-linked (GlcNAc...) asparagine).

It belongs to the fungal hydrophobin family. In terms of assembly, self-assembles to form functional amyloid fibrils called rodlets. Self-assembly into fibrillar rodlets occurs spontaneously at hydrophobic:hydrophilic interfaces and the rodlets further associate laterally to form amphipathic monolayers.

The protein resides in the secreted. It localises to the cell wall. In terms of biological role, aerial growth, conidiation, and dispersal of filamentous fungi in the environment rely upon a capability of their secreting small amphipathic proteins called hydrophobins (HPBs) with low sequence identity. Class I can self-assemble into an outermost layer of rodlet bundles on aerial cell surfaces, conferring cellular hydrophobicity that supports fungal growth, development and dispersal; whereas Class II form highly ordered films at water-air interfaces through intermolecular interactions but contribute nothing to the rodlet structure. Vmh3 is a class I hydrophobin that is essential for the maintenance of the surface hydrophobicity of the mycelium and might be involved in the development of fruiting bodies. Plays an important role in hyphal resistance against environmental stress. Necessary for the efficient biodegradation of lignin. In Pleurotus ostreatus (strain PC15) (Oyster mushroom), this protein is Class I hydrophobin 3.